We begin with the raw amino-acid sequence, 604 residues long: UvrABC system protein C (604 aa).

Residues 10–89 enclose the GIY-YIG domain; sequence ELPGVYLMKD…VKKNRPHYNI (80 aa). The region spanning 199–234 is the UVR domain; sequence SGTIKELQEKMNIHAIAQEYESAAVIRDQIDALKSL.

This sequence belongs to the UvrC family. As to quaternary structure, interacts with UvrB in an incision complex.

The protein localises to the cytoplasm. Its function is as follows. The UvrABC repair system catalyzes the recognition and processing of DNA lesions. UvrC both incises the 5' and 3' sides of the lesion. The N-terminal half is responsible for the 3' incision and the C-terminal half is responsible for the 5' incision. In Methanococcoides burtonii (strain DSM 6242 / NBRC 107633 / OCM 468 / ACE-M), this protein is UvrABC system protein C.